The primary structure comprises 180 residues: Putative manganese efflux pump MntP (180 aa).

Transmembrane regions (helical) follow at residues 1 to 21 (MLSVILLAIALAMDAFSISIT), 34 to 54 (ILWYGIFFGGFQCFMPIIGYV), 63 to 83 (ISTYAPWIAFILLLCIGLNMI), 103 to 123 (VTLLAIATSIDAFAVGVTFAI), 129 to 149 (VIPCAIIGIITFLFSIVGIFI), and 160 to 180 (KFQILGGVILILLGFKILLGF).

Belongs to the MntP (TC 9.B.29) family.

It is found in the cell membrane. Functionally, probably functions as a manganese efflux pump. This is Putative manganese efflux pump MntP from Methanosphaera stadtmanae (strain ATCC 43021 / DSM 3091 / JCM 11832 / MCB-3).